Consider the following 122-residue polypeptide: Small ribosomal subunit protein uS13 (122 aa).

The interval 95–122 (GLPVRGQRTHTNARTRKGKAKPIAGKKK) is disordered.

This sequence belongs to the universal ribosomal protein uS13 family. Part of the 30S ribosomal subunit. Forms a loose heterodimer with protein S19. Forms two bridges to the 50S subunit in the 70S ribosome.

Its function is as follows. Located at the top of the head of the 30S subunit, it contacts several helices of the 16S rRNA. In the 70S ribosome it contacts the 23S rRNA (bridge B1a) and protein L5 of the 50S subunit (bridge B1b), connecting the 2 subunits; these bridges are implicated in subunit movement. Contacts the tRNAs in the A and P-sites. In Zymomonas mobilis subsp. mobilis (strain ATCC 31821 / ZM4 / CP4), this protein is Small ribosomal subunit protein uS13.